The sequence spans 235 residues: MGQKINPIGLRLGINRTWDSRWFAGKNEYGKLLHEDVKIREILHKELKQAAVARIVIERPHKKCRVTIHSARPGVVIGKKGADIDKLRKKVADITSSDVVINIVEIRKPELDATLVAESIAQQLERRVAFRRAMKRAVQSAMRLGAEGIRINCSGRLGGAEIARMEWYREGRVPLHTLRADIDYGVATAFTTFGTCGVKVWIFKGEILEHDPMAQDKRMAEGDGGGSSRPRRDAA.

Positions 39-107 constitute a KH type-2 domain; it reads IREILHKELK…DVVINIVEIR (69 aa). The disordered stretch occupies residues 215-235; sequence QDKRMAEGDGGGSSRPRRDAA.

This sequence belongs to the universal ribosomal protein uS3 family. As to quaternary structure, part of the 30S ribosomal subunit. Forms a tight complex with proteins S10 and S14.

Functionally, binds the lower part of the 30S subunit head. Binds mRNA in the 70S ribosome, positioning it for translation. The chain is Small ribosomal subunit protein uS3 from Rhodopseudomonas palustris (strain ATCC BAA-98 / CGA009).